Consider the following 812-residue polypeptide: Ribonucleoside-diphosphate reductase large subunit (812 aa).

In terms of domain architecture, ATP-cone spans Leu-12 to Lys-103. Residues Lys-16–Arg-17, Glu-22–Lys-28, Thr-64, and Asp-68 contribute to the ATP site. Ser-213 and Ser-228 together coordinate GDP. A disulfide bridge links Cys-229 with Cys-455. DTTP-binding positions include Asp-237–Ile-239, Lys-254, Arg-267, and Cys-274–Gly-275. Residue Asn-438 coordinates GDP. Asn-438 functions as the Proton acceptor in the catalytic mechanism. Catalysis depends on Cys-440, which acts as the Cysteine radical intermediate. Residues Glu-442 and Thr-615 to Thr-618 each bind GDP. Glu-442 serves as the catalytic Proton acceptor. Thr-778 is modified (phosphothreonine). Phosphoserine is present on Ser-782. A Phosphotyrosine modification is found at Tyr-786.

It belongs to the ribonucleoside diphosphate reductase large chain family. As to quaternary structure, heterodimer of a large and a small subunit.

The catalysed reaction is a 2'-deoxyribonucleoside 5'-diphosphate + [thioredoxin]-disulfide + H2O = a ribonucleoside 5'-diphosphate + [thioredoxin]-dithiol. Under complex allosteric control mediated by deoxynucleoside triphosphates and ATP binding to separate specificity and activation sites on the M1 subunit. The type of nucleotide bound at the specificity site determines substrate preference. It seems probable that ATP makes the enzyme reduce CDP and UDP, dGTP favors ADP reduction and dTTP favors GDP reduction. Stimulated by ATP and inhibited by dATP binding to the activity site. In terms of biological role, provides the precursors necessary for DNA synthesis. Catalyzes the biosynthesis of deoxyribonucleotides from the corresponding ribonucleotides. This chain is Ribonucleoside-diphosphate reductase large subunit (RnrL), found in Drosophila melanogaster (Fruit fly).